Here is a 380-residue protein sequence, read N- to C-terminus: Chaperone protein DnaJ 2 (380 aa).

In terms of domain architecture, J spans 10-75 (DYYKILGVSK…KKRKEYDQAR (66 aa)). Positions 32–56 (KIARDNHPDSHPGDKAAEARFKEAS) are enriched in basic and acidic residues. A disordered region spans residues 32–63 (KIARDNHPDSHPGDKAAEARFKEASEANDVLS). Residues 151–230 (GTTVTMDMVS…CHGSGRAKST (80 aa)) form a CR-type zinc finger. 8 residues coordinate Zn(2+): C164, C167, C181, C184, C204, C207, C218, and C221. 4 CXXCXGXG motif repeats span residues 164 to 171 (CQACRGTG), 181 to 188 (CSTCQGSG), 204 to 211 (CPDCHGRG), and 218 to 225 (CQVCHGSG).

Belongs to the DnaJ family. As to quaternary structure, homodimer. It depends on Zn(2+) as a cofactor.

It is found in the cytoplasm. Functionally, participates actively in the response to hyperosmotic and heat shock by preventing the aggregation of stress-denatured proteins and by disaggregating proteins, also in an autonomous, DnaK-independent fashion. Unfolded proteins bind initially to DnaJ; upon interaction with the DnaJ-bound protein, DnaK hydrolyzes its bound ATP, resulting in the formation of a stable complex. GrpE releases ADP from DnaK; ATP binding to DnaK triggers the release of the substrate protein, thus completing the reaction cycle. Several rounds of ATP-dependent interactions between DnaJ, DnaK and GrpE are required for fully efficient folding. Also involved, together with DnaK and GrpE, in the DNA replication of plasmids through activation of initiation proteins. The chain is Chaperone protein DnaJ 2 from Cutibacterium acnes (strain DSM 16379 / KPA171202) (Propionibacterium acnes).